A 228-amino-acid polypeptide reads, in one-letter code: PKHD-type hydroxylase XC_1340 (228 aa).

A Fe2OG dioxygenase domain is found at 78 to 180; sequence RIYPPLFNRY…RVASFFWIQS (103 aa). Residues histidine 96, aspartate 98, and histidine 161 each contribute to the Fe cation site. Arginine 171 contacts 2-oxoglutarate.

It depends on Fe(2+) as a cofactor. L-ascorbate serves as cofactor.

The sequence is that of PKHD-type hydroxylase XC_1340 from Xanthomonas campestris pv. campestris (strain 8004).